Reading from the N-terminus, the 37-residue chain is Large ribosomal subunit protein bL36 (37 aa).

4 residues coordinate Zn(2+): Cys11, Cys14, Cys27, and His32.

This sequence belongs to the bacterial ribosomal protein bL36 family. In terms of assembly, part of the 50S ribosomal subunit. Zn(2+) serves as cofactor.

Its function is as follows. Binds the 23S rRNA. This is Large ribosomal subunit protein bL36 (rpmJ) from Deinococcus radiodurans (strain ATCC 13939 / DSM 20539 / JCM 16871 / CCUG 27074 / LMG 4051 / NBRC 15346 / NCIMB 9279 / VKM B-1422 / R1).